The chain runs to 631 residues: Pro-interleukin-16 (631 aa).

Disordered regions lie at residues 30 to 269 (ENPG…FPLT) and 317 to 344 (PKEG…ASDT). Over residues 132-144 (SSSSSSIKQRISS) the composition is skewed to low complexity. Residue Ser-221 is modified to Phosphoserine. The span at 322 to 344 (SPTSSSNEDSAANGSAETSASDT) shows a compositional bias: polar residues. The tract at residues 405–501 (KQLDSIHVTI…IVTRKLTAES (97 aa)) is interaction with PPP1R12A, PPP1R12B and PPP1R12C. PDZ domains lie at 411 to 496 (HVTI…VTRK) and 533 to 618 (TVTL…IRRK).

As to quaternary structure, homotetramer. Pro-interleukin-16 interacts (via PDZ 2 domain) with PPP1R12A, PPP1R12B and PPP1R12C. Pro-interleukin-16 interacts with GRIN2A. Pro-interleukin-16 interacts with GABPB1. Pro-interleukin-16 interacts (via PDZ 3 domain) with HDAC3.

Its subcellular location is the secreted. It is found in the cytoplasm. The protein resides in the nucleus. Functionally, interleukin-16 stimulates a migratory response in CD4+ lymphocytes, monocytes, and eosinophils. Primes CD4+ T-cells for IL-2 and IL-15 responsiveness. Also induces T-lymphocyte expression of interleukin 2 receptor. Ligand for CD4. In terms of biological role, pro-interleukin-16 is involved in cell cycle progression in T-cells. Appears to be involved in transcriptional regulation of SKP2 and is probably part of a transcriptional repression complex on the core promoter of the SKP2 gene. May act as a scaffold for GABPB1 (the DNA-binding subunit the GABP transcription factor complex) and HDAC3 thus maintaining transcriptional repression and blocking cell cycle progression in resting T-cells. This is Pro-interleukin-16 (IL16) from Chlorocebus aethiops (Green monkey).